We begin with the raw amino-acid sequence, 937 residues long: Protocadherin alpha-7 (937 aa).

Residues 1–29 (MVCPNGYDPGGRHLLLFIIILAAWEAGRG) form the signal peptide. 6 consecutive Cadherin domains span residues 30 to 133 (QLHY…PPVF), 134 to 242 (PATQ…APVF), 243 to 350 (DRTL…APQL), 351 to 455 (TLTS…APAF), 456 to 565 (AQPE…APAL), and 581 to 678 (VPRS…APKA). At 30-697 (QLHYSVPEEA…GPETELVDVN (668 aa)) the chain is on the extracellular side. Cys96 and Cys102 form a disulfide bridge. N-linked (GlcNAc...) asparagine glycosylation is found at Asn254 and Asn265. Asn548 is a glycosylation site (N-linked (GlcNAc...) asparagine). Residues 698-718 (VYLIIAICAVSSLLVLTLLLY) traverse the membrane as a helical segment. The Cytoplasmic portion of the chain corresponds to 719–937 (TALRCSAPSS…GNSTTDNSDQ (219 aa)). Disordered stretches follow at residues 755–795 (RQRV…DWRY) and 814–937 (ILRA…NSDQ). 5 PXXP repeats span residues 774 to 777 (PSLP), 786 to 789 (PRQP), 819 to 822 (PGGP), 860 to 863 (PGNP), and 878 to 881 (PGSP). Positions 774-881 (PSLPQGPSST…PDKFIIPGSP (108 aa)) are 5 X 4 AA repeats of P-X-X-P. A compositionally biased stretch (polar residues) spans 775-787 (SLPQGPSSTDNPR). A compositionally biased stretch (basic and acidic residues) spans 896-910 (DKSDFITFGKKEETK).

As to quaternary structure, forms homodimers in trans (molecules expressed by two different cells). Forms promiscuous heterodimers in cis (at the plasma membrane of the same cell) with other protocadherins.

It is found in the cell membrane. Its function is as follows. Calcium-dependent cell-adhesion protein involved in cells self-recognition and non-self discrimination. Thereby, it is involved in the establishment and maintenance of specific neuronal connections in the brain. The polypeptide is Protocadherin alpha-7 (Homo sapiens (Human)).